The sequence spans 341 residues: S-adenosylmethionine:tRNA ribosyltransferase-isomerase (341 aa).

This sequence belongs to the QueA family. Monomer.

It localises to the cytoplasm. The enzyme catalyses 7-aminomethyl-7-carbaguanosine(34) in tRNA + S-adenosyl-L-methionine = epoxyqueuosine(34) in tRNA + adenine + L-methionine + 2 H(+). It participates in tRNA modification; tRNA-queuosine biosynthesis. Functionally, transfers and isomerizes the ribose moiety from AdoMet to the 7-aminomethyl group of 7-deazaguanine (preQ1-tRNA) to give epoxyqueuosine (oQ-tRNA). In Citrifermentans bemidjiense (strain ATCC BAA-1014 / DSM 16622 / JCM 12645 / Bem) (Geobacter bemidjiensis), this protein is S-adenosylmethionine:tRNA ribosyltransferase-isomerase.